The primary structure comprises 120 residues: Large ribosomal subunit protein uL24 (120 aa).

The protein belongs to the universal ribosomal protein uL24 family. In terms of assembly, part of the 50S ribosomal subunit.

Its function is as follows. One of two assembly initiator proteins, it binds directly to the 5'-end of the 23S rRNA, where it nucleates assembly of the 50S subunit. Located at the polypeptide exit tunnel on the outside of the subunit. The sequence is that of Large ribosomal subunit protein uL24 from Archaeoglobus fulgidus (strain ATCC 49558 / DSM 4304 / JCM 9628 / NBRC 100126 / VC-16).